The sequence spans 109 residues: MQTLPKERRYETLSYLPPLTDVQIEKQVQYILSQGYIPAVEFNEVSEPTELYWTLWKLPLFGAKTSREVLAEVQSCRSQYPGHYIRVVGFDNIKQCQILSFIVHKPSRY.

It belongs to the RuBisCO small chain family. Heterohexadecamer of 8 large and 8 small subunits. Forms complexes of many stoichiometries with Raf1 and RbcL.

The protein resides in the carboxysome. Functionally, ruBisCO catalyzes two reactions: the carboxylation of D-ribulose 1,5-bisphosphate, the primary event in carbon dioxide fixation, as well as the oxidative fragmentation of the pentose substrate in the photorespiration process. Both reactions occur simultaneously and in competition at the same active site. Although the small subunit is not catalytic it is essential for maximal activity. This is Ribulose bisphosphate carboxylase small subunit from Nostoc sp. (strain PCC 7120 / SAG 25.82 / UTEX 2576).